We begin with the raw amino-acid sequence, 141 residues long: Putative antiporter subunit mnhB2 (141 aa).

4 helical membrane passes run threonine 10–glycine 30, glycine 35–phenylalanine 55, isoleucine 70–glycine 90, and isoleucine 114–leucine 134.

The protein belongs to the CPA3 antiporters (TC 2.A.63) subunit B family. May form a heterooligomeric complex that consists of seven subunits: mnhA2, mnhB2, mnhC2, mnhD2, mnhE2, mnhF2 and mnhG2.

The protein localises to the cell membrane. The sequence is that of Putative antiporter subunit mnhB2 (mnhB2) from Staphylococcus aureus (strain Mu3 / ATCC 700698).